Reading from the N-terminus, the 305-residue chain is Tetraspanin-12 (305 aa).

The Cytoplasmic portion of the chain corresponds to 1 to 12 (MAREDSVRCLRC). 2 S-palmitoyl cysteine lipidation sites follow: Cys-9 and Cys-12. Residues 13 to 33 (LLYALNLLFWLMSISVLGVSA) traverse the membrane as a helical segment. Topologically, residues 34–59 (WIRDYLNNVLTLTAETRVEEAVILTY) are extracellular. The helical transmembrane segment at 60 to 80 (FPVVHPVMIAVCCFLILVGML) threads the bilayer. Topologically, residues 81–89 (GYCGTVKRN) are cytoplasmic. Cys-83 carries S-palmitoyl cysteine lipidation. Residues 90-110 (LLLLVWYFGSLLVIFCVELAC) form a helical membrane-spanning segment. Over 111–224 (GVWTYEQEIT…RGTKQLQVLR (114 aa)) the chain is Extracellular. Residues 225–245 (FLGISIGVTQILAMILTITLL) traverse the membrane as a helical segment. The Cytoplasmic portion of the chain corresponds to 246–305 (WALYYDRRDPGADQIMSLKNDTSQQLSCHSVELLKPSLTGIFEHTSMANSFNTHFEMEEL).

Belongs to the tetraspanin (TM4SF) family. Component of a complex, at least composed of TSPAN12, FZD4 and norrin (NDP). Post-translationally, palmitoylated; required for interaction with ADAM10. The precise position of palmitoylated residues is unclear and occurs either on Cys-9, Cys-12 and/or Cys-83.

Its subcellular location is the cell membrane. In terms of biological role, regulator of cell surface receptor signal transduction. Plays a central role in retinal vascularization by regulating norrin (NDP) signal transduction. Acts in concert with norrin (NDP) to promote FZD4 multimerization and subsequent activation of FZD4, leading to promote accumulation of beta-catenin (CTNNB1) and stimulate LEF/TCF-mediated transcriptional programs. Suprisingly, it only activates the norrin (NDP)-dependent activation of FZD4, while it does not activate the Wnt-dependent activation of FZD4, suggesting the existence of a Wnt-independent signaling that also promote accumulation the beta-catenin (CTNNB1). The protein is Tetraspanin-12 (TSPAN12) of Gallus gallus (Chicken).